Consider the following 545-residue polypeptide: Probable target of rapamycin complex 2 subunit BIT2 (545 aa).

Disordered regions lie at residues 1 to 24 (MATDLNRKRSATSGSLSVTNPNIK) and 78 to 166 (DGSN…GTSS). 3 stretches are compositionally biased toward polar residues: residues 11–24 (ATSGSLSVTNPNIK), 106–130 (IGSSSSNRMEGNTTSNDSLFSSNSR), and 151–166 (RSGSKNYGTVITGTSS).

As to quaternary structure, interacts with the target of rapamycin complex 2 (TORC2) subunit TSC11 and the TORC2 effectors SLM1 and SLM2.

The sequence is that of Probable target of rapamycin complex 2 subunit BIT2 (BIT2) from Saccharomyces cerevisiae (strain ATCC 204508 / S288c) (Baker's yeast).